The following is a 375-amino-acid chain: MPAEMKSAASGSDPRSSGERDKALNLVLGQIERNFGKGSIMRLGDASRMRVETISTGALTLDLALGGGYPKGRVVEIYGPESSGKTTLTLHAIAEVQKRGGVAAFVDAEHALDPVYAASLGVDVENLLVSQPDTGEMALEIVDQLVRSAAVDIVVIDSVAALTPRAEIEGEMGDLAVGSQARLMSQAMRKITGNIGKSGCTVIFLNQLRLKIGVTYGNPETTTGGNALKFYASVRLDIRRIQTLKKGTEEFGIRAKVKVAKNKVAPPFRIAEFDILFGRGISTLGCLLDLAEETGVVIRKGAWYSYEGDNIGQGRDNTITWMEENPEAAITIEQLVRQKLTEGSEVKANSMKPLAAAARTAAAAAPKATADEAAA.

The disordered stretch occupies residues 1–20; sequence MPAEMKSAASGSDPRSSGER. Residue 79–86 participates in ATP binding; it reads GPESSGKT.

This sequence belongs to the RecA family.

Its subcellular location is the cytoplasm. In terms of biological role, can catalyze the hydrolysis of ATP in the presence of single-stranded DNA, the ATP-dependent uptake of single-stranded DNA by duplex DNA, and the ATP-dependent hybridization of homologous single-stranded DNAs. It interacts with LexA causing its activation and leading to its autocatalytic cleavage. This Parasynechococcus marenigrum (strain WH8102) protein is Protein RecA.